The following is a 378-amino-acid chain: Succinyl-diaminopimelate desuccinylase (378 aa).

Histidine 68 lines the Zn(2+) pocket. Aspartate 70 is an active-site residue. A Zn(2+)-binding site is contributed by aspartate 101. Glutamate 135 (proton acceptor) is an active-site residue. The Zn(2+) site is built by glutamate 136, glutamate 164, and histidine 350.

It belongs to the peptidase M20A family. DapE subfamily. As to quaternary structure, homodimer. Zn(2+) serves as cofactor. It depends on Co(2+) as a cofactor.

It carries out the reaction N-succinyl-(2S,6S)-2,6-diaminopimelate + H2O = (2S,6S)-2,6-diaminopimelate + succinate. It participates in amino-acid biosynthesis; L-lysine biosynthesis via DAP pathway; LL-2,6-diaminopimelate from (S)-tetrahydrodipicolinate (succinylase route): step 3/3. Its function is as follows. Catalyzes the hydrolysis of N-succinyl-L,L-diaminopimelic acid (SDAP), forming succinate and LL-2,6-diaminopimelate (DAP), an intermediate involved in the bacterial biosynthesis of lysine and meso-diaminopimelic acid, an essential component of bacterial cell walls. The polypeptide is Succinyl-diaminopimelate desuccinylase (Vibrio campbellii (strain ATCC BAA-1116)).